A 306-amino-acid chain; its full sequence is tRNA (guanine-N(7)-)-methyltransferase (306 aa).

The span at 1 to 19 (MSSTAPLDSKATEQITTAA) shows a compositional bias: polar residues. Positions 1 to 65 (MSSTAPLDSK…EASPELPSDE (65 aa)) are disordered. S-adenosyl-L-methionine is bound by residues Gly121, 144–145 (EI), 180–181 (NA), and Cys200. Asp203 is an active-site residue. Residue 278–280 (TEE) participates in S-adenosyl-L-methionine binding.

It belongs to the class I-like SAM-binding methyltransferase superfamily. TrmB family. As to quaternary structure, forms a complex with TRM82.

It is found in the nucleus. The enzyme catalyses guanosine(46) in tRNA + S-adenosyl-L-methionine = N(7)-methylguanosine(46) in tRNA + S-adenosyl-L-homocysteine. It participates in tRNA modification; N(7)-methylguanine-tRNA biosynthesis. Functionally, catalyzes the formation of N(7)-methylguanine at position 46 (m7G46) in tRNA. The sequence is that of tRNA (guanine-N(7)-)-methyltransferase from Lodderomyces elongisporus (strain ATCC 11503 / CBS 2605 / JCM 1781 / NBRC 1676 / NRRL YB-4239) (Yeast).